The following is a 314-amino-acid chain: Ribosomal RNA small subunit methyltransferase H (314 aa).

S-adenosyl-L-methionine is bound by residues Gly33 to His35, Asp52, Phe84, Asp105, and Gln112.

The protein belongs to the methyltransferase superfamily. RsmH family.

It is found in the cytoplasm. It catalyses the reaction cytidine(1402) in 16S rRNA + S-adenosyl-L-methionine = N(4)-methylcytidine(1402) in 16S rRNA + S-adenosyl-L-homocysteine + H(+). Functionally, specifically methylates the N4 position of cytidine in position 1402 (C1402) of 16S rRNA. This Lactobacillus delbrueckii subsp. bulgaricus (strain ATCC 11842 / DSM 20081 / BCRC 10696 / JCM 1002 / NBRC 13953 / NCIMB 11778 / NCTC 12712 / WDCM 00102 / Lb 14) protein is Ribosomal RNA small subunit methyltransferase H.